Reading from the N-terminus, the 487-residue chain is N-succinylglutamate 5-semialdehyde dehydrogenase (487 aa).

221 to 226 is a binding site for NAD(+); sequence GSSRTG. Catalysis depends on residues glutamate 244 and cysteine 278.

The protein belongs to the aldehyde dehydrogenase family. AstD subfamily.

It carries out the reaction N-succinyl-L-glutamate 5-semialdehyde + NAD(+) + H2O = N-succinyl-L-glutamate + NADH + 2 H(+). It participates in amino-acid degradation; L-arginine degradation via AST pathway; L-glutamate and succinate from L-arginine: step 4/5. Functionally, catalyzes the NAD-dependent reduction of succinylglutamate semialdehyde into succinylglutamate. The protein is N-succinylglutamate 5-semialdehyde dehydrogenase of Pseudomonas putida (strain ATCC 700007 / DSM 6899 / JCM 31910 / BCRC 17059 / LMG 24140 / F1).